Here is a 117-residue protein sequence, read N- to C-terminus: Large ribosomal subunit protein bL20 (117 aa).

This sequence belongs to the bacterial ribosomal protein bL20 family.

Functionally, binds directly to 23S ribosomal RNA and is necessary for the in vitro assembly process of the 50S ribosomal subunit. It is not involved in the protein synthesizing functions of that subunit. In Roseiflexus castenholzii (strain DSM 13941 / HLO8), this protein is Large ribosomal subunit protein bL20.